A 419-amino-acid chain; its full sequence is CCA-adding enzyme (419 aa).

ATP contacts are provided by glycine 8 and arginine 11. Residues glycine 8 and arginine 11 each coordinate CTP. Mg(2+)-binding residues include aspartate 21 and aspartate 23. Arginine 91, arginine 137, and arginine 140 together coordinate ATP. The CTP site is built by arginine 91, arginine 137, and arginine 140.

The protein belongs to the tRNA nucleotidyltransferase/poly(A) polymerase family. Bacterial CCA-adding enzyme type 2 subfamily. The cofactor is Mg(2+).

It catalyses the reaction a tRNA precursor + 2 CTP + ATP = a tRNA with a 3' CCA end + 3 diphosphate. The catalysed reaction is a tRNA with a 3' CCA end + 2 CTP + ATP = a tRNA with a 3' CCACCA end + 3 diphosphate. Functionally, catalyzes the addition and repair of the essential 3'-terminal CCA sequence in tRNAs without using a nucleic acid template. Adds these three nucleotides in the order of C, C, and A to the tRNA nucleotide-73, using CTP and ATP as substrates and producing inorganic pyrophosphate. tRNA 3'-terminal CCA addition is required both for tRNA processing and repair. Also involved in tRNA surveillance by mediating tandem CCA addition to generate a CCACCA at the 3' terminus of unstable tRNAs. While stable tRNAs receive only 3'-terminal CCA, unstable tRNAs are marked with CCACCA and rapidly degraded. The sequence is that of CCA-adding enzyme from Buchnera aphidicola subsp. Baizongia pistaciae (strain Bp).